We begin with the raw amino-acid sequence, 90 residues long: Large ribosomal subunit protein bL27 (90 aa).

Positions 1–22 are disordered; the sequence is MAHKKSGGSSSNGRDSAGRRLG.

It belongs to the bacterial ribosomal protein bL27 family.

In Caulobacter sp. (strain K31), this protein is Large ribosomal subunit protein bL27.